Reading from the N-terminus, the 205-residue chain is Protein-L-isoaspartate O-methyltransferase (205 aa).

Serine 56 is a catalytic residue.

It belongs to the methyltransferase superfamily. L-isoaspartyl/D-aspartyl protein methyltransferase family.

Its subcellular location is the cytoplasm. The catalysed reaction is [protein]-L-isoaspartate + S-adenosyl-L-methionine = [protein]-L-isoaspartate alpha-methyl ester + S-adenosyl-L-homocysteine. Its function is as follows. Catalyzes the methyl esterification of L-isoaspartyl residues in peptides and proteins that result from spontaneous decomposition of normal L-aspartyl and L-asparaginyl residues. It plays a role in the repair and/or degradation of damaged proteins. This is Protein-L-isoaspartate O-methyltransferase from Aeromonas hydrophila subsp. hydrophila (strain ATCC 7966 / DSM 30187 / BCRC 13018 / CCUG 14551 / JCM 1027 / KCTC 2358 / NCIMB 9240 / NCTC 8049).